We begin with the raw amino-acid sequence, 116 residues long: SPbeta prophage-derived uncharacterized protein YomQ (116 aa).

The sequence is that of SPbeta prophage-derived uncharacterized protein YomQ (yomQ) from Bacillus subtilis (strain 168).